A 350-amino-acid chain; its full sequence is DNA repair protein rhp55 (350 aa).

51-58 (GAPGMGKT) lines the ATP pocket. Positions 331-350 (QSIPTNSSQRRKRSILECES) are disordered.

The protein belongs to the RecA family. RAD55 subfamily.

Its subcellular location is the nucleus. In terms of biological role, required for radiation resistance and meiotic viability and acts in recombination and recombinational DNA repair pathways. In Schizosaccharomyces pombe (strain 972 / ATCC 24843) (Fission yeast), this protein is DNA repair protein rhp55 (rhp55).